A 314-amino-acid chain; its full sequence is Solute carrier family 25 member 44 (314 aa).

Solcar repeat units lie at residues 18–100, 107–210, and 220–302; these read KKFY…TRKF, SNTV…YAEQ, and PHIV…LKKL. Transmembrane regions (helical) follow at residues 20–42, 71–90, 113–133, 185–201, 222–239, and 278–296; these read FYVF…TLIR, TGLY…GQCY, LVAG…IDVV, GYVA…AVWW, IVFQ…ASIL, and LSAR…VVGY.

This sequence belongs to the mitochondrial carrier (TC 2.A.29) family.

The protein resides in the mitochondrion membrane. It carries out the reaction L-valine(in) = L-valine(out). It catalyses the reaction L-leucine(in) = L-leucine(out). Its function is as follows. Mitochondrial solute transporter which transports branched-chain amino acid (BCAA; valine, leucine and isoleucine) into mitochondria in brown adipose tissue (BAT). BAT is involved in BCAA catabolism and actively utilizes BCAA in the mitochondria for thermogenesis. This is Solute carrier family 25 member 44 from Pongo abelii (Sumatran orangutan).